The chain runs to 195 residues: NADH-quinone oxidoreductase subunit C (195 aa).

It belongs to the complex I 30 kDa subunit family. NDH-1 is composed of 14 different subunits. Subunits NuoB, C, D, E, F, and G constitute the peripheral sector of the complex.

It is found in the cell inner membrane. The enzyme catalyses a quinone + NADH + 5 H(+)(in) = a quinol + NAD(+) + 4 H(+)(out). In terms of biological role, NDH-1 shuttles electrons from NADH, via FMN and iron-sulfur (Fe-S) centers, to quinones in the respiratory chain. The immediate electron acceptor for the enzyme in this species is believed to be ubiquinone. Couples the redox reaction to proton translocation (for every two electrons transferred, four hydrogen ions are translocated across the cytoplasmic membrane), and thus conserves the redox energy in a proton gradient. In Laribacter hongkongensis (strain HLHK9), this protein is NADH-quinone oxidoreductase subunit C.